The primary structure comprises 376 residues: N-acetyldiaminopimelate deacetylase (376 aa).

D69 is an active-site residue. E128 (proton acceptor) is an active-site residue.

Belongs to the peptidase M20A family. N-acetyldiaminopimelate deacetylase subfamily.

The enzyme catalyses N-acetyl-(2S,6S)-2,6-diaminopimelate + H2O = (2S,6S)-2,6-diaminopimelate + acetate. It functions in the pathway amino-acid biosynthesis; L-lysine biosynthesis via DAP pathway; LL-2,6-diaminopimelate from (S)-tetrahydrodipicolinate (acetylase route): step 3/3. Its function is as follows. Catalyzes the conversion of N-acetyl-diaminopimelate to diaminopimelate and acetate. This chain is N-acetyldiaminopimelate deacetylase, found in Streptococcus pneumoniae (strain 70585).